A 686-amino-acid chain; its full sequence is MRTLLIDNYDSFTHNLFQYIGEATGQPPVVVPNDADWSRLPLEDFDAIVVSPGPGSPDRERDFGISRRAITDSGLPVLGVCLGHQGIAQLFGGTVGLAPEPMHGRVSEVRHTGEDVFRGLPSPFTAVRYHSLAATDLPDELEPLAWSDDGVVMGLRHREKPLWGVQFHPESIGSDFGREIMANFRDLALAHHRARRDAADSPYELHVRRVDVLPDAEEVRRGCLPGEGATFWLDSSSVLEGASRFSFLGDDRGPLAEYLTYRVADGVVSVRGSDGTTTRTRRPFFSYLEEQLERRRVPVAPDLPFEFNLGYVGYLGYELKAETTGDPAHRSPHPDAAFLFADRAIALDHQEGCCYLLALDRRGHDDGARAWLRETAETLTGLAVRVPAEPTPAMVFGVPEAAAGFGPLARARHDKDAYLKRIDECLKEIRNGESYEICLTNMVTAPTEATALPLYSALRAISPVPYGALLEFPELSVLSASPERFLTIGADGGVESKPIKGTRPRGGTAEEDERLRADLAGREKDRAENLMIVDLVRNDLNSVCAIGSVHVPRLFEVETYAPVHQLVSTIRGRLRPGTSTAACVRAAFPGGSMTGAPKKRTMEIIDRLEEGPRGVYSGALGWFALSGAADLSIVIRTIVLADGRAEFGVGGAIVSLSDQEEEFTETVVKARAMVTALDGSAVAGAR.

Positions 2 to 194 (RTLLIDNYDS…RDLALAHHRA (193 aa)) constitute a Glutamine amidotransferase type-1 domain. C81 functions as the Nucleophile in the catalytic mechanism. Residues H168 and E170 contribute to the active site. Positions 233–686 (LDSSSVLEGA…LDGSAVAGAR (454 aa)) are PABB component.

It in the C-terminal section; belongs to the anthranilate synthase component I family.

It catalyses the reaction chorismate + L-glutamine = 4-amino-4-deoxychorismate + L-glutamate. Its pathway is antibiotic biosynthesis. Its function is as follows. Involved in chloramphenicol biosynthesis. Catalyzes the biosynthesis of 4-amino-4-deoxychorismate (ADC) from chorismate and glutamine. This is Aminodeoxychorismate synthase from Streptomyces venezuelae (strain ATCC 10712 / CBS 650.69 / DSM 40230 / JCM 4526 / NBRC 13096 / PD 04745).